The following is a 307-amino-acid chain: 1-aminocyclopropane-1-carboxylate oxidase 5 (307 aa).

Residues 106–134 are a coiled coil; the sequence is SNIKETMGEYREEVRKLASKMMEVMDENL. Positions 152 to 256 constitute a Fe2OG dioxygenase domain; that stretch reads GEETAFFGTK…RRSIASFYNP (105 aa). The Fe cation site is built by His180, Asp182, and His237. A 2-oxoglutarate-binding site is contributed by Arg247.

It belongs to the iron/ascorbate-dependent oxidoreductase family. Fe(2+) serves as cofactor.

It carries out the reaction 1-aminocyclopropane-1-carboxylate + L-ascorbate + O2 = ethene + L-dehydroascorbate + hydrogen cyanide + CO2 + 2 H2O. Its pathway is alkene biosynthesis; ethylene biosynthesis via S-adenosyl-L-methionine; ethylene from S-adenosyl-L-methionine: step 2/2. Its function is as follows. Enzyme involved in the ethylene biosynthesis. In Arabidopsis thaliana (Mouse-ear cress), this protein is 1-aminocyclopropane-1-carboxylate oxidase 5.